A 732-amino-acid chain; its full sequence is Polyribonucleotide nucleotidyltransferase (732 aa).

D503 and D509 together coordinate Mg(2+). Residues P570–I629 enclose the KH domain. The S1 motif domain maps to G639 to K713. The disordered stretch occupies residues L710–N732. Residues V715–N732 show a composition bias toward basic and acidic residues.

Belongs to the polyribonucleotide nucleotidyltransferase family. The cofactor is Mg(2+).

Its subcellular location is the cytoplasm. The catalysed reaction is RNA(n+1) + phosphate = RNA(n) + a ribonucleoside 5'-diphosphate. In terms of biological role, involved in mRNA degradation. Catalyzes the phosphorolysis of single-stranded polyribonucleotides processively in the 3'- to 5'-direction. The chain is Polyribonucleotide nucleotidyltransferase from Chlorobium phaeobacteroides (strain DSM 266 / SMG 266 / 2430).